Reading from the N-terminus, the 275-residue chain is Large ribosomal subunit protein uL2 (275 aa).

Positions 223 to 275 (VAMNPVDHPHGGGEGRTGEGRVPVSPWGTPAKGYRTRNNKRTDNMIVRRRHSK) are disordered. Positions 229–241 (DHPHGGGEGRTGE) are enriched in basic and acidic residues.

This sequence belongs to the universal ribosomal protein uL2 family. As to quaternary structure, part of the 50S ribosomal subunit. Forms a bridge to the 30S subunit in the 70S ribosome.

In terms of biological role, one of the primary rRNA binding proteins. Required for association of the 30S and 50S subunits to form the 70S ribosome, for tRNA binding and peptide bond formation. It has been suggested to have peptidyltransferase activity; this is somewhat controversial. Makes several contacts with the 16S rRNA in the 70S ribosome. This Laribacter hongkongensis (strain HLHK9) protein is Large ribosomal subunit protein uL2.